The primary structure comprises 170 residues: Ribosome maturation factor RimM (170 aa).

The 73-residue stretch at 98–170 (EGQYYWADLE…RIELDWDPDF (73 aa)) folds into the PRC barrel domain.

Belongs to the RimM family. Binds ribosomal protein uS19.

Its subcellular location is the cytoplasm. An accessory protein needed during the final step in the assembly of 30S ribosomal subunit, possibly for assembly of the head region. Essential for efficient processing of 16S rRNA. May be needed both before and after RbfA during the maturation of 16S rRNA. It has affinity for free ribosomal 30S subunits but not for 70S ribosomes. In Alkalilimnicola ehrlichii (strain ATCC BAA-1101 / DSM 17681 / MLHE-1), this protein is Ribosome maturation factor RimM.